The sequence spans 626 residues: Chaperone protein DnaK (626 aa).

Thr175 is subject to Phosphothreonine; by autocatalysis. Low complexity predominate over residues 586–606; sequence GAEGAAAGADGAGASAGSASG. The interval 586–626 is disordered; sequence GAEGAAAGADGAGASAGSASGSDDDTVEAEVVDDDDDKDNK. Residues 607–626 are compositionally biased toward acidic residues; it reads SDDDTVEAEVVDDDDDKDNK.

The protein belongs to the heat shock protein 70 family.

Its function is as follows. Acts as a chaperone. The chain is Chaperone protein DnaK from Bifidobacterium longum (strain DJO10A).